The following is a 1149-amino-acid chain: Probable phospholipid-transporting ATPase IA (1149 aa).

The Cytoplasmic portion of the chain corresponds to 1-65; that stretch reads MPTMRRTVSE…TAKYNIITFL (65 aa). At serine 25 the chain carries Phosphoserine. Threonine 28 is subject to Phosphothreonine. Serine 29 is modified (phosphoserine). The helical transmembrane segment at 66–86 threads the bilayer; that stretch reads PRFLYSQFRRAANSFFLFIAL. At 87–92 the chain is on the extracellular side; the sequence is LQQIPD. A helical membrane pass occupies residues 93–115; it reads VSPTGRYTTLVPLLFILAVAAIK. Residues 116 to 297 lie on the Cytoplasmic side of the membrane; it reads EIIEDIKRHK…SNVERITNVQ (182 aa). A helical transmembrane segment spans residues 298-319; it reads ILILFCILIAMSLVCSVGSAIW. Residues 320–344 are Extracellular-facing; that stretch reads NRRHSGRDWYLNLNYGGANNFGLNF. A helical transmembrane segment spans residues 345-366; that stretch reads LTFIILFNNLIPISLLVTLEVV. The Cytoplasmic segment spans residues 367–842; sequence KFTQAYFINW…GAWNYNRGSK (476 aa). Aspartate 409 functions as the 4-aspartylphosphate intermediate in the catalytic mechanism. ATP is bound by residues aspartate 409, lysine 410, threonine 411, glutamate 493, phenylalanine 534, lysine 557, arginine 590, threonine 670, glycine 671, aspartate 672, 726–733, arginine 760, and lysine 766; that span reads ALIIDGKT. Mg(2+) is bound at residue aspartate 409. Threonine 411 contacts Mg(2+). Aspartate 786 serves as a coordination point for Mg(2+). ATP is bound by residues asparagine 789 and aspartate 790. Aspartate 790 serves as a coordination point for Mg(2+). The chain crosses the membrane as a helical span at residues 843–863; sequence CILYCFYKNIVLYIIEIWFAF. The Extracellular segment spans residues 864–875; the sequence is VNGFSGQILFER. A helical membrane pass occupies residues 876–895; that stretch reads WCIGLYNVMFTAMPPLTLGI. Topologically, residues 896–925 are cytoplasmic; that stretch reads FERSCRKEYMLKYPELYKTSQNALDFNTKV. A helical membrane pass occupies residues 926–947; sequence FWVHCLNGLFHSVILFWFPLKA. Residues 948 to 961 are Extracellular-facing; sequence LQYGTVFENGRTSD. The chain crosses the membrane as a helical span at residues 962–984; that stretch reads YLLLGNFVYTFVVITVCLKAGLE. Residues 985–990 are Cytoplasmic-facing; sequence TSYWTW. The chain crosses the membrane as a helical span at residues 991–1011; sequence FSHIAIWGSIALWVVFFGIYS. The Extracellular segment spans residues 1012 to 1029; sequence SLWPAVPMAPDMSGEAAM. The chain crosses the membrane as a helical span at residues 1030 to 1055; it reads LFSSGVFWMGLLFIPVASLLLDVVYK. Over 1056-1149 the chain is Cytoplasmic; that stretch reads VIKRTAFKTL…DTTKQRPDEW (94 aa). 1080–1087 contacts ATP; the sequence is GAVVLGKS. A Phosphoserine modification is found at serine 1111.

The protein belongs to the cation transport ATPase (P-type) (TC 3.A.3) family. Type IV subfamily. Component of a P4-ATPase flippase complex which consists of a catalytic alpha subunit and an accessory beta subunit. Interacts with TMEM30A to form a flippase complex; this complex forms an intermediate phosphoenzyme. Interacts with TMEM30B; this interaction is reported conflictingly. Mg(2+) is required as a cofactor. Cleaved by calpain in a caspase- and calcium influx-dependent manner during platelet apoptosis leading to a 100 kDa polypeptide. Kidney.

The protein resides in the cytoplasmic vesicle. It is found in the secretory vesicle. The protein localises to the chromaffin granule membrane. Its subcellular location is the cytoplasmic granule. It localises to the cell membrane. The protein resides in the endoplasmic reticulum. It is found in the golgi apparatus. The catalysed reaction is ATP + H2O + phospholipidSide 1 = ADP + phosphate + phospholipidSide 2.. It carries out the reaction a 1,2-diacyl-sn-glycero-3-phospho-L-serine(out) + ATP + H2O = a 1,2-diacyl-sn-glycero-3-phospho-L-serine(in) + ADP + phosphate + H(+). In terms of biological role, catalytic component of a P4-ATPase flippase complex which catalyzes the hydrolysis of ATP coupled to the transport of aminophospholipids from the outer to the inner leaflet of various membranes and ensures the maintenance of asymmetric distribution of phospholipids. Phospholipid translocation also seems to be implicated in vesicle formation and in uptake of lipid signaling molecules. In vitro, its ATPase activity is selectively and stereospecifically stimulated by phosphatidylserine (PS). The flippase complex ATP8A1:TMEM30A seems to play a role in regulation of cell migration probably involving flippase-mediated translocation of phosphatidylethanolamine (PE) at the cell membrane. Acts as aminophospholipid translocase at the cell membrane in neuronal cells. This chain is Probable phospholipid-transporting ATPase IA, found in Bos taurus (Bovine).